A 668-amino-acid polypeptide reads, in one-letter code: DNA ligase (668 aa).

NAD(+) is bound by residues 37–41 (DAIYD), 86–87 (SL), and E116. K118 (N6-AMP-lysine intermediate) is an active-site residue. R139, E176, K289, and K313 together coordinate NAD(+). The Zn(2+) site is built by C407, C410, C425, and C430. The region spanning 586 to 668 (AQSSALAGLT…RALIETREMP (83 aa)) is the BRCT domain.

This sequence belongs to the NAD-dependent DNA ligase family. LigA subfamily. Mg(2+) serves as cofactor. Requires Mn(2+) as cofactor.

The enzyme catalyses NAD(+) + (deoxyribonucleotide)n-3'-hydroxyl + 5'-phospho-(deoxyribonucleotide)m = (deoxyribonucleotide)n+m + AMP + beta-nicotinamide D-nucleotide.. Functionally, DNA ligase that catalyzes the formation of phosphodiester linkages between 5'-phosphoryl and 3'-hydroxyl groups in double-stranded DNA using NAD as a coenzyme and as the energy source for the reaction. It is essential for DNA replication and repair of damaged DNA. In Gloeobacter violaceus (strain ATCC 29082 / PCC 7421), this protein is DNA ligase.